Reading from the N-terminus, the 1069-residue chain is Calcium-transporting ATPase 10, plasma membrane-type (1069 aa).

Residues 1-29 are disordered; the sequence is MSGQFNNSPRGEDKDVEAGTSSFTEYEDS. Serine 2 carries the post-translational modification N-acetylserine. The Cytoplasmic portion of the chain corresponds to 2 to 180; that stretch reads SGQFNNSPRG…NTYPQKKGRS (179 aa). The interaction with calmodulin stretch occupies residues 42-53; it reads ERLRRWRQAALV. The chain crosses the membrane as a helical span at residues 181–201; that stretch reads FWRFVWEASQDLTLIILIVAA. At 202–219 the chain is on the lumenal side; it reads VASLALGIKTEGIEKGWY. Residues 220–240 form a helical membrane-spanning segment; it reads DGISIAFAVLLVIVVTATSDY. The Cytoplasmic segment spans residues 241-369; that stretch reads RQSLQFQNLN…GGETPLQVRL (129 aa). Residues 370 to 389 form a helical membrane-spanning segment; sequence NGVATFIGIVGLTVAGVVLF. Over 390 to 426 the chain is Lumenal; that stretch reads VLVVRYFTGHTKNEQGGPQFIGGKTKFEHVLDDLVEI. Residues 427-444 traverse the membrane as a helical segment; the sequence is FTVAVTIVVVAVPEGLPL. The Cytoplasmic portion of the chain corresponds to 445–844; the sequence is AVTLTLAYSM…RWGRSVYANI (400 aa). The 4-aspartylphosphate intermediate role is filled by aspartate 482. Mg(2+) contacts are provided by aspartate 789 and aspartate 793. A helical transmembrane segment spans residues 845–863; that stretch reads QKFIQFQLTVNVAALVINV. The Lumenal portion of the chain corresponds to 864–874; the sequence is VAAISAGEVPL. A helical membrane pass occupies residues 875–895; that stretch reads TAVQLLWVNLIMDTLGALALA. Residues 896 to 915 lie on the Cytoplasmic side of the membrane; that stretch reads TEPPTDHLMDRAPVGRREPL. The chain crosses the membrane as a helical span at residues 916–938; the sequence is ITNIMWRNLFIQAMYQVTVLLIL. The Lumenal portion of the chain corresponds to 939 to 951; sequence NFRGISILHLKSK. The chain crosses the membrane as a helical span at residues 952-973; the sequence is PNAERVKNTVIFNAFVICQVFN. Residues 974–991 lie on the Cytoplasmic side of the membrane; sequence EFNARKPDEINIFRGVLR. Residues 992–1013 form a helical membrane-spanning segment; sequence NHLFVGIISITIVLQVVIVEFL. Topologically, residues 1014 to 1023 are lumenal; it reads GTFASTTKLD. The chain crosses the membrane as a helical span at residues 1024–1045; it reads WEMWLVCIGIGSISWPLAVIGK. Topologically, residues 1046–1069 are cytoplasmic; sequence LIPVPETPVSQYFRINRWRRNSSG.

It belongs to the cation transport ATPase (P-type) (TC 3.A.3) family. Type IIB subfamily.

It is found in the membrane. The catalysed reaction is Ca(2+)(in) + ATP + H2O = Ca(2+)(out) + ADP + phosphate + H(+). With respect to regulation, activated by calmodulin. In terms of biological role, this magnesium-dependent enzyme catalyzes the hydrolysis of ATP coupled with the translocation of calcium from the cytosol into the endoplasmic reticulum. The protein is Calcium-transporting ATPase 10, plasma membrane-type (ACA10) of Arabidopsis thaliana (Mouse-ear cress).